A 197-amino-acid chain; its full sequence is Xanthine phosphoribosyltransferase (197 aa).

Xanthine is bound by residues leucine 20 and threonine 27. 128 to 132 is a binding site for 5-phospho-alpha-D-ribose 1-diphosphate; it reads ANGQA. Position 156 (lysine 156) interacts with xanthine.

This sequence belongs to the purine/pyrimidine phosphoribosyltransferase family. Xpt subfamily. In terms of assembly, homodimer.

It is found in the cytoplasm. It catalyses the reaction XMP + diphosphate = xanthine + 5-phospho-alpha-D-ribose 1-diphosphate. It functions in the pathway purine metabolism; XMP biosynthesis via salvage pathway; XMP from xanthine: step 1/1. In terms of biological role, converts the preformed base xanthine, a product of nucleic acid breakdown, to xanthosine 5'-monophosphate (XMP), so it can be reused for RNA or DNA synthesis. This is Xanthine phosphoribosyltransferase from Lactococcus lactis subsp. cremoris (strain MG1363).